We begin with the raw amino-acid sequence, 74 residues long: Conotoxin ca17a (74 aa).

The signal sequence occupies residues Met-1–Ala-20. Positions Gln-21 to Arg-40 are excised as a propeptide. The residue at position 51 (Pro-51) is a 4-hydroxyproline.

Contains disulfide bonds. In terms of tissue distribution, expressed by the venom gland.

The protein resides in the secreted. This is Conotoxin ca17a from Conus caracteristicus (Characteristic cone).